A 103-amino-acid polypeptide reads, in one-letter code: Large ribosomal subunit protein uL24 (103 aa).

Belongs to the universal ribosomal protein uL24 family. As to quaternary structure, part of the 50S ribosomal subunit.

In terms of biological role, one of two assembly initiator proteins, it binds directly to the 5'-end of the 23S rRNA, where it nucleates assembly of the 50S subunit. One of the proteins that surrounds the polypeptide exit tunnel on the outside of the subunit. This chain is Large ribosomal subunit protein uL24, found in Mannheimia succiniciproducens (strain KCTC 0769BP / MBEL55E).